We begin with the raw amino-acid sequence, 493 residues long: Alpha-amylase-related protein (493 aa).

Positions 1 to 19 are cleaved as a signal peptide; sequence MFKLALTLTLCLAGSLSLA. At Q20 the chain carries Pyrrolidone carboxylic acid. C47 and C103 form a disulfide bridge. Residues N117, Q168, and D177 each coordinate Ca(2+). A disulfide bridge connects residues C156 and C170. R205 is a binding site for chloride. D207 serves as the catalytic Nucleophile. H211 contacts Ca(2+). E244 serves as the catalytic Proton donor. Positions 307 and 342 each coordinate chloride. Cystine bridges form between C375-C381, C417-C440, and C447-C459.

It belongs to the glycosyl hydrolase 13 family. In terms of assembly, monomer. It depends on Ca(2+) as a cofactor. Requires chloride as cofactor.

The protein localises to the secreted. The enzyme catalyses Endohydrolysis of (1-&gt;4)-alpha-D-glucosidic linkages in polysaccharides containing three or more (1-&gt;4)-alpha-linked D-glucose units.. The sequence is that of Alpha-amylase-related protein (Amyrel) from Drosophila teissieri (Fruit fly).